The chain runs to 474 residues: MPPVSEVDRGPVEESSGGLKRSDCVCPVCLEIFLEPVTLPCMHTFCKPCFLETVDKSNMCCPLCRKRVSTWARLNSRNKTLVNMELWRRIQDAFPSQCERRVQGIDDDEEAVMIPKPRVCQPGELRKEYEDQISKLVEEKRALEEAERRASEEYIQRLLAEEEERLEEERRRREEQQLENDEKLARLLSLELNSGPASESTCNIKPAEATPAKKKPSVGDIEKFLRPVPHRQPSSSDSSPDSSLMANKENILSPPKPLSALSAEDCGKLTVHMLECNGKPSTSSFNPSTSEHTFVFNTPKSSSVKRKSSEIELQSEVDLHSKRPCALLRFDSSSEDSPFLSEVAVHEEALRSRWQQEEEDRRLALRIQKELDRENSVDRRKGSADSYQLRQKNTSVSTTTSPDVEGTKKGSNTTTAKNCTGRRGEEKTEKRLSGTTPGKRPGVKTPVSSTAVSSTVKKGTKQTTLTEMFPNMGS.

Positions 1–12 are enriched in basic and acidic residues; sequence MPPVSEVDRGPV. Positions 1–20 are disordered; sequence MPPVSEVDRGPVEESSGGLK. The segment at 26–65 adopts an RING-type zinc-finger fold; sequence CPVCLEIFLEPVTLPCMHTFCKPCFLETVDKSNMCCPLCR. Residues 119-137 carry the LR motif 1 motif; it reads VCQPGELRKEYEDQISKLV. The UMI motif signature appears at 152–160; the sequence is EEYIQRLLA. The MIU motif 1 motif lies at 174–195; that stretch reads EEQQLENDEKLARLLSLELNSG. Polar residues predominate over residues 192-203; the sequence is LNSGPASESTCN. 2 disordered regions span residues 192-259 and 367-474; these read LNSG…KPLS and IQKE…NMGS. Residues 233-243 show a composition bias toward low complexity; sequence PSSSDSSPDSS. The MIU motif 2 motif lies at 353 to 376; the sequence is RWQQEEEDRRLALRIQKELDRENS. The span at 367-383 shows a compositional bias: basic and acidic residues; that stretch reads IQKELDRENSVDRRKGS. Positions 379 to 390 match the LR motif 2 motif; the sequence is RRKGSADSYQLR. 2 stretches are compositionally biased toward polar residues: residues 385 to 402 and 409 to 418; these read DSYQ…TTSP and KGSNTTTAKN. A compositionally biased stretch (basic and acidic residues) spans 422 to 432; the sequence is RRGEEKTEKRL. Residues 443–457 are compositionally biased toward low complexity; the sequence is VKTPVSSTAVSSTVK.

The protein belongs to the RNF168 family. In terms of assembly, monomer.

The protein localises to the nucleus. The catalysed reaction is S-ubiquitinyl-[E2 ubiquitin-conjugating enzyme]-L-cysteine + [acceptor protein]-L-lysine = [E2 ubiquitin-conjugating enzyme]-L-cysteine + N(6)-ubiquitinyl-[acceptor protein]-L-lysine.. It functions in the pathway protein modification; protein ubiquitination. In terms of biological role, E3 ubiquitin-protein ligase required for accumulation of repair proteins to sites of DNA damage. Acts with ube2n/ubc13 to amplify the rnf8-dependent histone ubiquitination. Recruited to sites of DNA damage at double-strand breaks (DSBs) by binding to ubiquitinated histone H2A and ubiquitinates histone H2A and H2AX, leading to amplify the rnf8-dependent H2A ubiquitination and promoting the formation of 'Lys-63'-linked ubiquitin conjugates. This leads to concentrate ubiquitinated histones H2A and H2AX at DNA lesions. Catalyzes monoubiquitination of 'Lys-13' and 'Lys-15' of nucleosomal histone H2A (H2AK13Ub and H2AK15Ub, respectively). The protein is E3 ubiquitin-protein ligase rnf168 of Danio rerio (Zebrafish).